We begin with the raw amino-acid sequence, 606 residues long: Phosphomethylpyrimidine synthase (606 aa).

Polar residues predominate over residues 1 to 13 (MTTADARTPASKQ). 2 disordered regions span residues 1–49 (MTTA…SRPD) and 105–147 (AGRP…DGRP). A compositionally biased stretch (low complexity) spans 14 to 31 (NDGTPDGTTPDAGTPNDG). The segment covering 105–117 (AGRPVRPEDDGLK) has biased composition (basic and acidic residues). Substrate-binding positions include Asn-213, Met-242, Tyr-271, His-307, 327–329 (SRG), 368–371 (DGLR), and Glu-407. His-411 contributes to the Zn(2+) binding site. Tyr-434 lines the substrate pocket. His-475 is a binding site for Zn(2+). [4Fe-4S] cluster-binding residues include Cys-555, Cys-558, and Cys-563.

It belongs to the ThiC family. The cofactor is [4Fe-4S] cluster.

It catalyses the reaction 5-amino-1-(5-phospho-beta-D-ribosyl)imidazole + S-adenosyl-L-methionine = 4-amino-2-methyl-5-(phosphooxymethyl)pyrimidine + CO + 5'-deoxyadenosine + formate + L-methionine + 3 H(+). Its pathway is cofactor biosynthesis; thiamine diphosphate biosynthesis. Its function is as follows. Catalyzes the synthesis of the hydroxymethylpyrimidine phosphate (HMP-P) moiety of thiamine from aminoimidazole ribotide (AIR) in a radical S-adenosyl-L-methionine (SAM)-dependent reaction. This chain is Phosphomethylpyrimidine synthase, found in Streptomyces griseus subsp. griseus (strain JCM 4626 / CBS 651.72 / NBRC 13350 / KCC S-0626 / ISP 5235).